The following is a 743-amino-acid chain: Protein will decrease acetylation (743 aa).

WD repeat units follow at residues 389 to 428 (ERSRGLTSAHLDPSECHMLAGFDNSAVQLWQLNQSYCRGK), 493 to 524 (LRGHTKGVTDVRFSAHYPLMYSVSKDATMRCW), 535 to 576 (YRSH…ALII), 577 to 618 (YAGH…LMRV), 619 to 660 (FADC…QLAE), and 661 to 702 (LKDH…PMSD).

The protein belongs to the WD repeat TAF5 family. As to quaternary structure, component of the Spt-Ada-Gcn5 acetyltransferase (SAGA) complex consisting of wda/Taf5L, Saf6, Taf9, Taf10b, Taf12, Ada1, Spt3, Spt7, Spt20, Sf3b3, Sf3b5, Nipped-A/Tra1, a histone acetyltransferase (HAT) module made up of Gcn5, Ada2b (Isoform B), Ada3 and Sgf29, and a deubiquitinase (DUB) module made up of not/nonstop, Sgf11 and e(y)2 tethered to SAGA by Atxn7. Not essential for the assembly or integrity of the SAGA complex. Not a component of the Ada2a-containing ATAC complex.

It is found in the nucleus. The protein localises to the chromosome. Component of the transcription regulatory complex SAGA, a multiprotein complex that activates transcription by remodeling chromatin and mediating histone acetylation and deubiquitination. The SAGA complex predominantly acetylates histone H3. Involved in acetylation of histone H3 on 'Lys-10' (H3K9ac) by the SAGA complex in the larval central nervous system. Involved in SAGA complex coactivator functions. Required for oogenesis. The protein is Protein will decrease acetylation of Drosophila melanogaster (Fruit fly).